A 269-amino-acid chain; its full sequence is uncharacterized protein (269 aa).

This is an uncharacterized protein from Escherichia coli (strain K12).